An 883-amino-acid polypeptide reads, in one-letter code: Integrator complex subunit 6 (883 aa).

One can recognise a VWFA domain in the interval 3–227 (ILLFLIDTSA…QCLESLVQKV (225 aa)). Residues 625–632 (MMIDEADE) carry the Inhibitory loop motif. Residues 666 to 686 (RRQSPAVNSHIGGKGPPAPMT) form a disordered region. Ser800 carries the phosphoserine modification.

It belongs to the Integrator subunit 6 family. Component of the Integrator complex, composed of core subunits INTS1, INTS2, INTS3, INTS4, INTS5, INTS6, INTS7, INTS8, INTS9/RC74, INTS10, INTS11/CPSF3L, INTS12, INTS13, INTS14 and INTS15. The core complex associates with protein phosphatase 2A subunits PPP2CA and PPP2R1A, to form the Integrator-PP2A (INTAC) complex.

Its subcellular location is the nucleus. It localises to the chromosome. Its function is as follows. Component of the integrator complex, a multiprotein complex that terminates RNA polymerase II (Pol II) transcription in the promoter-proximal region of genes. The integrator complex provides a quality checkpoint during transcription elongation by driving premature transcription termination of transcripts that are unfavorably configured for transcriptional elongation: the complex terminates transcription by (1) catalyzing dephosphorylation of the C-terminal domain (CTD) of Pol II subunit POLR2A/RPB1 and SUPT5H/SPT5, (2) degrading the exiting nascent RNA transcript via endonuclease activity and (3) promoting the release of Pol II from bound DNA. The integrator complex is also involved in terminating the synthesis of non-coding Pol II transcripts, such as enhancer RNAs (eRNAs), small nuclear RNAs (snRNAs), telomerase RNAs and long non-coding RNAs (lncRNAs). Within the integrator complex, INTS6 acts as a molecular adapter that promotes assembly of protein phosphatase 2A (PP2A) subunits to the integrator core complex, promoting recruitment of PP2A to transcription pause-release checkpoint. Mediates recruitment of cytoplasmic dynein to the nuclear envelope, probably as component of the integrator complex. The protein is Integrator complex subunit 6 (Ints6) of Mus musculus (Mouse).